The following is a 27-amino-acid chain: Alpha-amylase/trypsin inhibitor CM17 (27 aa).

The protein belongs to the protease inhibitor I6 (cereal trypsin/alpha-amylase inhibitor) family. In terms of tissue distribution, developing endosperm.

Its subcellular location is the secreted. Alpha-amylase/trypsin inhibitor. It could be involved in insect defense mechanisms. The sequence is that of Alpha-amylase/trypsin inhibitor CM17 from Triticum aestivum (Wheat).